The primary structure comprises 533 residues: NAD(P)H-quinone oxidoreductase chain 4 (533 aa).

15 helical membrane-spanning segments follow: residues 5–25 (VPWLSLSILVPIVGALLVPLV), 36–56 (WYALIVTLITFLITVAAYLTG), 70–90 (VSWLPDLGLTWAVGADGLSMP), 91–111 (LILLTSFITSLACLAAWPVSF), 115–135 (LFYFLLLAMDGGQIAVFAVQD), 137–157 (LLFFLAWELELIPVYLLLAIW), 169–189 (FILYTAGSSLFILLAALAMGF), 210–230 (GFQLLCYAGLLIAFGVKLPIV), 244–264 (TAPVHMLLAGILLKMGGYALL), 278–298 (FAPLLIVLGVVNIIYAALTSF), 315–335 (MGFVLIGVGSFSALGTSGAML), 336–356 (QMISHGLIGASLFFLVGATYD), 377–397 (FALWTVCALASLALPGMSGFV), 418–438 (VVICGLAAVGVILTPIYLLSM), and 465–485 (VYIIGCLLVPIIGIGLYPKLM).

Belongs to the complex I subunit 4 family.

The protein resides in the cellular thylakoid membrane. The catalysed reaction is a plastoquinone + NADH + (n+1) H(+)(in) = a plastoquinol + NAD(+) + n H(+)(out). It carries out the reaction a plastoquinone + NADPH + (n+1) H(+)(in) = a plastoquinol + NADP(+) + n H(+)(out). In terms of biological role, NDH-1 shuttles electrons from NAD(P)H, via FMN and iron-sulfur (Fe-S) centers, to quinones in the respiratory chain. The immediate electron acceptor for the enzyme in this species is believed to be plastoquinone. Couples the redox reaction to proton translocation (for every two electrons transferred, four hydrogen ions are translocated across the cytoplasmic membrane), and thus conserves the redox energy in a proton gradient. This is NAD(P)H-quinone oxidoreductase chain 4 from Synechococcus sp. (strain CC9605).